The primary structure comprises 454 residues: Peroxisome assembly protein 10 (454 aa).

The Peroxisomal matrix portion of the chain corresponds to 1–23 (MATQPPPARPPPPLTSSPYPYAA). A helical transmembrane segment spans residues 24–53 (APDIIRAHQKDAYFQGVLANRLSDLHRRLR). Position 54 (glycine 54) is a topological domain, cytoplasmic. The chain crosses the membrane as a helical span at residues 55–76 (ARSAHAWAAETRTFAAALYLCL). Residues 77–132 (TTLLGNRTLGEEYCDLVQVEEAPSKLFASSSSKAADDHIYENGLGGGGDGGPLLPS) are Peroxisomal matrix-facing. The chain crosses the membrane as a helical span at residues 133–165 (LPRRAGYILTAIVLPHLASRALPSVRSAIRKRL). Topologically, residues 166-201 (QSRLATLSRRRQQTGTKSGSGRGGRGGGGGITEYRV) are cytoplasmic. The disordered stretch occupies residues 171-194 (TLSRRRQQTGTKSGSGRGGRGGGG). A compositionally biased stretch (gly residues) spans 183–194 (SGSGRGGRGGGG). A helical membrane pass occupies residues 202-229 (LRYLLTHLTPLTSGAHFRAATLAVFYFT). Residues 230–276 (GAYYELSKWVWGLRYVFTTRAGRVVDDDHNRHHHSPQHGGGNGGRAG) are Peroxisomal matrix-facing. The helical transmembrane segment at 277–296 (YEVLGVLLVVQMAVRAWLHV) threads the bilayer. The Cytoplasmic segment spans residues 297–454 (REQLSSGSVA…VQHILPLRAA (158 aa)). Residues 302 to 329 (SGSVAGGGGEEEEDGEDGFRERTAFGPG) form a disordered region. Cysteine 402, cysteine 405, cysteine 417, histidine 419, cysteine 422, cysteine 425, cysteine 436, and cysteine 439 together coordinate Zn(2+). The RING-type zinc finger occupies 402-440 (CTLCLEELKDPAATQCGHVFCWACIGDWVREKPECPLCR).

It belongs to the pex2/pex10/pex12 family. In terms of assembly, component of the PEX2-PEX10-PEX12 retrotranslocation channel, composed of PEX2, PEX10 and PEX12.

It localises to the peroxisome membrane. It carries out the reaction S-ubiquitinyl-[E2 ubiquitin-conjugating enzyme]-L-cysteine + [acceptor protein]-L-lysine = [E2 ubiquitin-conjugating enzyme]-L-cysteine + N(6)-ubiquitinyl-[acceptor protein]-L-lysine.. The protein operates within protein modification; protein ubiquitination. The E3 ubiquitin-protein ligase activity is stimulated by PEX12. In terms of biological role, E3 ubiquitin-protein ligase component of a retrotranslocation channel required for peroxisome organization by mediating export of the PEX5 receptor from peroxisomes to the cytosol, thereby promoting PEX5 recycling. The retrotranslocation channel is composed of PEX2, PEX10 and PEX12; each subunit contributing transmembrane segments that coassemble into an open channel that specifically allows the passage of PEX5 through the peroxisomal membrane. PEX10 also regulates PEX5 recycling by acting as a E3 ubiquitin-protein ligase. When PEX5 recycling is compromised, PEX10 catalyzes polyubiquitination of PEX5 during its passage through the retrotranslocation channel, leading to its degradation. This Thermothelomyces thermophilus (strain ATCC 42464 / BCRC 31852 / DSM 1799) (Sporotrichum thermophile) protein is Peroxisome assembly protein 10.